The primary structure comprises 486 residues: Sensor protein PhoQ (486 aa).

Topologically, residues 1–16 are cytoplasmic; sequence MKKLLHLFFPLSLRVR. The chain crosses the membrane as a helical span at residues 17–37; that stretch reads FLLATAAVVLVLSLAYGMVAL. Topologically, residues 38 to 194 are periplasmic; the sequence is IGYSVSFDKT…LKSSYMVWSW (157 aa). Residues Asp-151 and Asp-152 each contribute to the a divalent metal cation site. The chain crosses the membrane as a helical span at residues 195 to 215; that stretch reads FIYVLSANLLLVIPLLWVAAW. The HAMP domain occupies 215–266; it reads WWSLRPIEALAKEVRELEEHNRELLNPATTRELTSLVRNLNRLLKSERERYD. Topologically, residues 216-486 are cytoplasmic; the sequence is WSLRPIEALA…GRQHSAPKDE (271 aa). The Histidine kinase domain maps to 274–480; the sequence is DLTHSLKTPL…RMEVIFGRQH (207 aa). His-277 is subject to Phosphohistidine; by autocatalysis. A Mg(2+)-binding site is contributed by Asn-385. Residues 385–393, 415–420, and 434–446 each bind ATP; these read NVLDNACKY, DDGPGI, and RVDT…GVGL. Mg(2+) is bound at residue Gln-442.

As to quaternary structure, homodimer.

The protein resides in the cell inner membrane. It carries out the reaction ATP + protein L-histidine = ADP + protein N-phospho-L-histidine.. In terms of biological role, member of the two-component regulatory system PhoP/PhoQ involved in virulence, adaptation to low Mg(2+) environments and the control of acid resistance genes. In low periplasmic Mg(2+), PhoQ functions as a membrane-associated protein kinase that undergoes autophosphorylation and subsequently transfers the phosphate to PhoP, resulting in the expression of PhoP-activated genes (PAG) and repression of PhoP-repressed genes (PRG). In high periplasmic Mg(2+), acts as a protein phosphatase that dephosphorylates phospho-PhoP, which results in the repression of PG and may lead to expression of some PRG. This chain is Sensor protein PhoQ (phoQ), found in Escherichia coli O6:H1 (strain CFT073 / ATCC 700928 / UPEC).